The chain runs to 418 residues: AADGYARARGVGACVVTFTVGGLSVLNAIAGAYSENLPLICIVGGPNSNDYGTNRILHHTIGLQDFSQEPRCFQTVTCYRAVVNNLEDAHELIDTAVSTALKESKPVYISIGCNLPGIPHPTFSREPVPFALSPRLSNMMGLEAAVEAAAEFLNKAVKPVLVGGPKMRVAKASDAFVELSDACGYAVAVMPSAKGLFPEHHSHFIGTYWGAVSTAFCAEIVESADAYLFAGPIFNDYSSVGYSLLLKKEKAIIVQPDRVTIGNGPAFGCVLMRDFLAALAKRLKHNPTAFENYHRIYVPEGHPLKCEPKEALRVNVLFQHIQNMLSGDSVVIAETGDSWFNCQKLKLPKGCGYEFQMQYGSIGWSVGATLGYAQAAPEKRVIACIGDGSFQVTAQDISTMLRCGQRTIIFLINNGGYT.

Residue His59 participates in substrate binding. The tract at residues 337 to 418 is thiamine pyrophosphate binding; it reads DSWFNCQKLK…IFLINNGGYT (82 aa). Positions 387, 414, and 416 each coordinate Mg(2+).

It belongs to the TPP enzyme family. As to quaternary structure, homotetramer. It depends on a metal cation as a cofactor. Requires thiamine diphosphate as cofactor. In terms of tissue distribution, leaves.

It carries out the reaction a 2-oxocarboxylate + H(+) = an aldehyde + CO2. The protein is Pyruvate decarboxylase 1 (PDC1) of Nicotiana tabacum (Common tobacco).